Consider the following 326-residue polypeptide: ATP synthase subunit gamma, mitochondrial (326 aa).

A mitochondrion-targeting transit peptide spans 1–45; the sequence is MAMAALRREGRRLAAAPFTSPTPLNALRSSLVSPSEEIGLSGVRS.

Belongs to the ATPase gamma chain family. As to quaternary structure, F-type ATPases have 2 components, CF(1) - the catalytic core - and CF(0) - the membrane proton channel. CF(1) has five subunits: alpha(3), beta(3), gamma(1), delta(1), epsilon(1). CF(0) has three main subunits: a, b and c.

It is found in the mitochondrion. It localises to the mitochondrion inner membrane. In terms of biological role, mitochondrial membrane ATP synthase (F(1)F(0) ATP synthase or Complex V) produces ATP from ADP in the presence of a proton gradient across the membrane which is generated by electron transport complexes of the respiratory chain. F-type ATPases consist of two structural domains, F(1) - containing the extramembraneous catalytic core, and F(0) - containing the membrane proton channel, linked together by a central stalk and a peripheral stalk. During catalysis, ATP synthesis in the catalytic domain of F(1) is coupled via a rotary mechanism of the central stalk subunits to proton translocation. Part of the complex F(1) domain and the central stalk which is part of the complex rotary element. The gamma subunit protrudes into the catalytic domain formed of alpha(3)beta(3). Rotation of the central stalk against the surrounding alpha(3)beta(3) subunits leads to hydrolysis of ATP in three separate catalytic sites on the beta subunits. This chain is ATP synthase subunit gamma, mitochondrial (ATPC), found in Ipomoea batatas (Sweet potato).